A 72-amino-acid polypeptide reads, in one-letter code: UPF0337 protein bsl2407 (72 aa).

Residues 1 to 55 are disordered; that stretch reads MGSTTDKIKGNANEAIGKAKQGIGEATGSDRLKGEGVVQEVKGKGQQAMGDAKDA. Over residues 35–47 the composition is skewed to low complexity; it reads EGVVQEVKGKGQQ.

Belongs to the UPF0337 (CsbD) family.

This chain is UPF0337 protein bsl2407, found in Bradyrhizobium diazoefficiens (strain JCM 10833 / BCRC 13528 / IAM 13628 / NBRC 14792 / USDA 110).